Consider the following 329-residue polypeptide: Malate dehydrogenase (329 aa).

NAD(+) is bound at residue Gly12–Gly18. Residues Arg95 and Arg101 each coordinate substrate. NAD(+) contacts are provided by residues Asn108, Gln115, and Val132–Asn134. Asn134 and Arg165 together coordinate substrate. The active-site Proton acceptor is the His190.

This sequence belongs to the LDH/MDH superfamily. MDH type 2 family.

The catalysed reaction is (S)-malate + NAD(+) = oxaloacetate + NADH + H(+). Catalyzes the reversible oxidation of malate to oxaloacetate. In Herminiimonas arsenicoxydans, this protein is Malate dehydrogenase.